Consider the following 521-residue polypeptide: uncharacterized protein (521 aa).

A disordered region spans residues 1-25 (MLQRSLGVNGRKLAMSARSAKRERK). A run of 6 helical transmembrane segments spans residues 68–88 (GAVW…GAVL), 114–134 (VLIV…SLTV), 160–180 (VVLA…HTVG), 192–212 (VAVT…IYFL), 290–310 (ALLV…GWCW), and 399–419 (LLFW…CAQI).

Its subcellular location is the cell membrane. This is an uncharacterized protein from Mycobacterium bovis (strain ATCC BAA-935 / AF2122/97).